The primary structure comprises 323 residues: GDP-L-fucose synthase 1 (323 aa).

An N-acetylalanine modification is found at A2. 23–29 is an NADP(+) binding site; it reads GHRGLVG. Y149 functions as the Proton donor/acceptor in the catalytic mechanism. NADP(+) is bound by residues K153, 176-179, and H192; that span reads PTNL. Positions 200, 215, 222, and 282 each coordinate substrate.

The protein belongs to the NAD(P)-dependent epimerase/dehydratase family. Fucose synthase subfamily. As to quaternary structure, binds and stabilizes MUR1. Homodimer. Highly expressed in roots and flowers, less abundant in leaves, stems and siliques.

It catalyses the reaction GDP-beta-L-fucose + NADP(+) = GDP-4-dehydro-alpha-D-rhamnose + NADPH + H(+). It participates in nucleotide-sugar biosynthesis; GDP-L-fucose biosynthesis via de novo pathway; GDP-L-fucose from GDP-alpha-D-mannose: step 2/2. Functionally, catalyzes the two-step NADP-dependent conversion of GDP-4-dehydro-6-deoxy-D-mannose to GDP-fucose, involving an epimerase and a reductase reaction. Not involved in the synthesis of GDP-L-galactose from GDP-D-mannose. The chain is GDP-L-fucose synthase 1 (GER1) from Arabidopsis thaliana (Mouse-ear cress).